Here is a 64-residue protein sequence, read N- to C-terminus: Metallothionein (64 aa).

This sequence belongs to the metallothionein superfamily. Type 4 family.

Its function is as follows. Metallothioneins have a high content of cysteine residues that bind various heavy metals. This Sterechinus neumayeri (Antarctic sea urchin) protein is Metallothionein.